A 380-amino-acid chain; its full sequence is Epoxyqueuosine reductase (380 aa).

Catalysis depends on aspartate 134, which acts as the Proton donor. A 4Fe-4S ferredoxin-type 1 domain is found at 178 to 208; it reads FPPDKPIEDQCGGCTKCIDICPTGALIQGGQ. The [4Fe-4S] cluster site is built by cysteine 188, cysteine 191, cysteine 194, cysteine 198, cysteine 214, cysteine 240, cysteine 243, and cysteine 247. One can recognise a 4Fe-4S ferredoxin-type 2 domain in the interval 226–258; the sequence is PEEYRDKIGNRIYGCDTCQTVCPKNKGMDFHNH.

Belongs to the QueG family. As to quaternary structure, monomer. It depends on cob(II)alamin as a cofactor. [4Fe-4S] cluster is required as a cofactor.

The protein localises to the cytoplasm. The catalysed reaction is epoxyqueuosine(34) in tRNA + AH2 = queuosine(34) in tRNA + A + H2O. The protein operates within tRNA modification; tRNA-queuosine biosynthesis. In terms of biological role, catalyzes the conversion of epoxyqueuosine (oQ) to queuosine (Q), which is a hypermodified base found in the wobble positions of tRNA(Asp), tRNA(Asn), tRNA(His) and tRNA(Tyr). This chain is Epoxyqueuosine reductase, found in Bacillus cereus (strain ATCC 14579 / DSM 31 / CCUG 7414 / JCM 2152 / NBRC 15305 / NCIMB 9373 / NCTC 2599 / NRRL B-3711).